Reading from the N-terminus, the 402-residue chain is Choline dehydrogenase (402 aa).

It belongs to the iron-containing alcohol dehydrogenase family.

The enzyme catalyses choline + NAD(+) = betaine aldehyde + NADH + H(+). Its pathway is amine and polyamine biosynthesis; betaine biosynthesis via choline pathway; betaine aldehyde from choline (dehydrogenase route): step 1/1. Involved in the biosynthesis of the osmoprotectant glycine betaine from choline. This is Choline dehydrogenase from Bacillus subtilis (strain 168).